Reading from the N-terminus, the 336-residue chain is MTEEHLTSQEAAEGEEAVELSLRPQLLSQYIGQGHVKKDMEVYIQAARQRDEALDHVLLYGPPGLGKTTLAFVIANELGVNLKSTSGPAIERAGDLVALLTDLEPGDVLFIDEIHRLAKPVEEVLYSAMEDFYIDIVVGEGQTTHAIHLPLPPFTLIGATTLAGQLSAPLRDRFGIVEHMQYYQVEDLEKIILRSSEVFHTKISPQAAHELARRSRGTPRVANRLLKRVRDFAEVKGEKEISLETTAMALKQLQVDSAGLDQTDRKLLRTMILSYGGGPVGIRTLASNIGEDRETIESLYEPYLLQNGFIVMTPRGRVVTQKAYQQLNLPLPGEEE.

Residues 1 to 183 form a large ATPase domain (RuvB-L) region; that stretch reads MTEEHLTSQE…FGIVEHMQYY (183 aa). ATP-binding positions include leucine 22, arginine 23, glycine 64, lysine 67, threonine 68, threonine 69, 130-132, arginine 173, tyrosine 183, and arginine 220; that span reads EDF. Position 68 (threonine 68) interacts with Mg(2+). Positions 184 to 254 are small ATPAse domain (RuvB-S); that stretch reads QVEDLEKIIL…TTAMALKQLQ (71 aa). The head domain (RuvB-H) stretch occupies residues 257–336; it reads SAGLDQTDRK…LNLPLPGEEE (80 aa). DNA-binding residues include arginine 293 and arginine 317.

Belongs to the RuvB family. Homohexamer. Forms an RuvA(8)-RuvB(12)-Holliday junction (HJ) complex. HJ DNA is sandwiched between 2 RuvA tetramers; dsDNA enters through RuvA and exits via RuvB. An RuvB hexamer assembles on each DNA strand where it exits the tetramer. Each RuvB hexamer is contacted by two RuvA subunits (via domain III) on 2 adjacent RuvB subunits; this complex drives branch migration. In the full resolvosome a probable DNA-RuvA(4)-RuvB(12)-RuvC(2) complex forms which resolves the HJ.

It is found in the cytoplasm. The enzyme catalyses ATP + H2O = ADP + phosphate + H(+). Its function is as follows. The RuvA-RuvB-RuvC complex processes Holliday junction (HJ) DNA during genetic recombination and DNA repair, while the RuvA-RuvB complex plays an important role in the rescue of blocked DNA replication forks via replication fork reversal (RFR). RuvA specifically binds to HJ cruciform DNA, conferring on it an open structure. The RuvB hexamer acts as an ATP-dependent pump, pulling dsDNA into and through the RuvAB complex. RuvB forms 2 homohexamers on either side of HJ DNA bound by 1 or 2 RuvA tetramers; 4 subunits per hexamer contact DNA at a time. Coordinated motions by a converter formed by DNA-disengaged RuvB subunits stimulates ATP hydrolysis and nucleotide exchange. Immobilization of the converter enables RuvB to convert the ATP-contained energy into a lever motion, pulling 2 nucleotides of DNA out of the RuvA tetramer per ATP hydrolyzed, thus driving DNA branch migration. The RuvB motors rotate together with the DNA substrate, which together with the progressing nucleotide cycle form the mechanistic basis for DNA recombination by continuous HJ branch migration. Branch migration allows RuvC to scan DNA until it finds its consensus sequence, where it cleaves and resolves cruciform DNA. This is Holliday junction branch migration complex subunit RuvB from Lactobacillus delbrueckii subsp. bulgaricus (strain ATCC 11842 / DSM 20081 / BCRC 10696 / JCM 1002 / NBRC 13953 / NCIMB 11778 / NCTC 12712 / WDCM 00102 / Lb 14).